Here is a 24-residue protein sequence, read N- to C-terminus: Superoxide dismutase [Cu-Zn] (24 aa).

This sequence belongs to the Cu-Zn superoxide dismutase family. As to quaternary structure, homodimer. Cu cation is required as a cofactor. Zn(2+) serves as cofactor.

It localises to the cytoplasm. The catalysed reaction is 2 superoxide + 2 H(+) = H2O2 + O2. Functionally, destroys radicals which are normally produced within the cells and which are toxic to biological systems. This is Superoxide dismutase [Cu-Zn] (sod1) from Aquarana catesbeiana (American bullfrog).